The chain runs to 1208 residues: Spindle pole body protein pcp1 (1208 aa).

Positions 1-17 are enriched in basic and acidic residues; it reads MSERDFNTQSPKFKDEN. The interval 1 to 91 is disordered; it reads MSERDFNTQS…DKYNGSLGDK (91 aa). Residues 48-64 are compositionally biased toward polar residues; sequence NDKSSFQTPLRNGSYQP. Coiled-coil stretches lie at residues 151–375, 387–803, 874–1091, and 1177–1204; these read LREQ…KENQ, TDSM…ANIE, GTET…QSTQ, and ERMK…AKAK. Ser-906 is modified (phosphoserine).

As to quaternary structure, interacts with ccq1.

The protein resides in the nucleus. It is found in the cytoplasm. It localises to the cytoskeleton. Its subcellular location is the microtubule organizing center. The protein localises to the spindle pole body. Spindle pole body component that binds calmodulin. Overexpression of pcp1 causes the formation of supernumerary SPB-like structures and disrupts both mitotic spindle assembly and chromosome segregation. The sequence is that of Spindle pole body protein pcp1 (pcp1) from Schizosaccharomyces pombe (strain 972 / ATCC 24843) (Fission yeast).